Consider the following 364-residue polypeptide: Growth hormone secretagogue receptor type 1 (364 aa).

The Extracellular segment spans residues 1–40; the sequence is MWNATPSEEPEPNVTLDLDWDASPGNDSLPDELLPLFPAP. Asn-13 and Asn-26 each carry an N-linked (GlcNAc...) asparagine glycan. Residues 41 to 66 traverse the membrane as a helical segment; it reads LLAGVTATCVALFVVGISGNLLTMLV. Residues 67–72 lie on the Cytoplasmic side of the membrane; that stretch reads VSRFRE. Residues 73–96 form a helical membrane-spanning segment; the sequence is LRTTTNLYLSSMAFSDLLIFLCMP. At 97–117 the chain is on the extracellular side; the sequence is LDLVRLWQYRPWNFGDLLCKL. A disulfide bond links Cys-115 and Cys-197. The chain crosses the membrane as a helical span at residues 118–139; it reads FQFVSESCTYATVLTITALSVE. The Cytoplasmic portion of the chain corresponds to 140–162; it reads RYFAICFPLRAKVVVTKGRVKLV. A helical transmembrane segment spans residues 163–183; that stretch reads ILVIWAVAFCSAGPIFVLVGV. The Extracellular portion of the chain corresponds to 184 to 211; that stretch reads EHENGTDPRDTNECRATEFAVRSGLLTV. Asn-187 carries an N-linked (GlcNAc...) asparagine glycan. Residues 212–235 traverse the membrane as a helical segment; it reads MVWVSSVFFFLPVFCLTVLYSLIG. Residues 236–263 lie on the Cytoplasmic side of the membrane; the sequence is RKLWRRRGDAAVGASLRDQNHKQTVKML. Residues 264–285 form a helical membrane-spanning segment; the sequence is AVVVFAFILCWLPFHVGRYLFS. The Extracellular portion of the chain corresponds to 286–302; that stretch reads KSFEPGSLEIAQISQYC. The chain crosses the membrane as a helical span at residues 303–326; the sequence is NLVSFVLFYLSAAINPILYNIMSK. Topologically, residues 327–364 are cytoplasmic; the sequence is KYRVAVFKLLGFESFSQRKLSTLKDESSRAWTKSSINT.

This sequence belongs to the G-protein coupled receptor 1 family.

It localises to the cell membrane. Functionally, receptor for ghrelin, coupled to G-alpha-11 proteins. Stimulates growth hormone secretion. Also binds other growth hormone releasing peptides (GHRP) (e.g. Met-enkephalin and GHRP-6) as well as non-peptide, low molecular weight secretagogues (e.g. L-692,429, MK-0677, adenosine). The protein is Growth hormone secretagogue receptor type 1 (Ghsr) of Rattus norvegicus (Rat).